Here is a 373-residue protein sequence, read N- to C-terminus: Cobalt-precorrin-5B C(1)-methyltransferase (373 aa).

The protein belongs to the CbiD family.

The enzyme catalyses Co-precorrin-5B + S-adenosyl-L-methionine = Co-precorrin-6A + S-adenosyl-L-homocysteine. Its pathway is cofactor biosynthesis; adenosylcobalamin biosynthesis; cob(II)yrinate a,c-diamide from sirohydrochlorin (anaerobic route): step 6/10. In terms of biological role, catalyzes the methylation of C-1 in cobalt-precorrin-5B to form cobalt-precorrin-6A. The protein is Cobalt-precorrin-5B C(1)-methyltransferase of Listeria monocytogenes serovar 1/2a (strain ATCC BAA-679 / EGD-e).